The chain runs to 294 residues: uncharacterized protein (294 aa).

Residues Thr-43 and Tyr-104 each act as charge relay system in the active site. Tyr-130 functions as the Proton donor in the catalytic mechanism. The active-site Schiff-base intermediate with substrate is Lys-158.

This sequence belongs to the DapA family. In terms of assembly, homotetramer.

The protein resides in the cytoplasm. This is an uncharacterized protein from Pyrococcus abyssi (strain GE5 / Orsay).